We begin with the raw amino-acid sequence, 128 residues long: Glycine cleavage system H protein (128 aa).

The 83-residue stretch at A22 to E104 folds into the Lipoyl-binding domain. N6-lipoyllysine is present on K63.

It belongs to the GcvH family. In terms of assembly, the glycine cleavage system is composed of four proteins: P, T, L and H. (R)-lipoate serves as cofactor.

The glycine cleavage system catalyzes the degradation of glycine. The H protein shuttles the methylamine group of glycine from the P protein to the T protein. This chain is Glycine cleavage system H protein, found in Anaeromyxobacter dehalogenans (strain 2CP-1 / ATCC BAA-258).